We begin with the raw amino-acid sequence, 95 residues long: Osteocalcin (95 aa).

An N-terminal signal peptide occupies residues 1–23; that stretch reads MRTIFLLTLLTLAALCLSDLTDA. Positions 24-49 are excised as a propeptide; sequence KPSGPESDKAFMSKQEGNKVVNRLRR. One can recognise a Gla domain in the interval 46-92; sequence RLRRYLGASVPSPDPLEPTREQCELNPACDELSDQYGLKTAYKRIYG. Ca(2+) is bound by residues glutamate 62, glutamate 66, glutamate 69, and aspartate 75. Glutamate 62, glutamate 66, and glutamate 69 each carry 4-carboxyglutamate. Cysteine 68 and cysteine 74 are disulfide-bonded.

The protein belongs to the osteocalcin/matrix Gla protein family. Post-translationally, gamma-carboxyglutamate residues are formed by vitamin K dependent carboxylation by GGCX. These residues are essential for the binding of calcium. Carboxylated in a Ptprv/Esp-dependent process. Decarboxylation promotes the hormone activity. Bone.

It localises to the secreted. The carboxylated form is one of the main organic components of the bone matrix, which constitutes 1-2% of the total bone protein: it acts as a negative regulator of bone formation and is required to limit bone formation without impairing bone resorption or mineralization. The carboxylated form binds strongly to apatite and calcium. Functionally, the uncarboxylated form acts as a hormone secreted by osteoblasts, which regulates different cellular processes, such as energy metabolism, male fertility and brain development. Regulates of energy metabolism by acting as a hormone favoring pancreatic beta-cell proliferation, insulin secretion and sensitivity and energy expenditure. Uncarboxylated osteocalcin hormone also promotes testosterone production in the testes: acts as a ligand for G protein-coupled receptor GPRC6A at the surface of Leydig cells, initiating a signaling response that promotes the expression of enzymes required for testosterone synthesis in a CREB-dependent manner. Also acts as a regulator of brain development: osteocalcin hormone crosses the blood-brain barrier and acts as a ligand for GPR158 on neurons, initiating a signaling response that prevents neuronal apoptosis in the hippocampus, favors the synthesis of all monoamine neurotransmitters and inhibits that of gamma-aminobutyric acid (GABA). Osteocalcin also crosses the placenta during pregnancy and maternal osteocalcin is required for fetal brain development. This is Osteocalcin from Mus musculus (Mouse).